Here is a 436-residue protein sequence, read N- to C-terminus: T-box transcription factor TBX6 (436 aa).

A DNA-binding region (T-box) is located at residues 100 to 273 (LWKEFSAVGT…ANPFAKGFRE (174 aa)). Residues 274–284 (NGRNCKRERDA) are compositionally biased toward basic and acidic residues. Disordered regions lie at residues 274–344 (NGRN…CGGP) and 360–383 (PSHL…APYS). The span at 332–344 (EAASASAPPCGGP) shows a compositional bias: low complexity.

It localises to the nucleus. In terms of biological role, T-box transcription factor that plays an essential role in the determination of the fate of axial stem cells: neural vs mesodermal. Acts in part by down-regulating, a specific enhancer (N1) of SOX2, to inhibit neural development. Seems to play also an essential role in left/right axis determination and acts through effects on Notch signaling around the node as well as through an effect on the morphology and motility of the nodal cilia. This is T-box transcription factor TBX6 (Tbx6) from Mus musculus (Mouse).